The following is a 453-amino-acid chain: MGLPIVAIIGRPNVGKSTLVNRLAGEQTAIVHDEPGVTRDRTYLPAYWSDREFQVVDTGGLVFNDDTEFLPLIRQQALAALHEASAAIFVVNGQTGPNSADEEIAEWLRQQPVPVFLAVNKCESPDQGSIQASEFWELGLGEPYPISAIHGNGTGELLDELIKHLPPTTELEENNEIKIAIIGRPNVGKSSLLNAFAGEERVIVSPISGTTRDAIDTFIERNGQNYRLIDTAGIRKKKSIDYGTEFFSINRAFKAIRRADVVLLVIDALDGVTEQDQKLAGRILDEGKACVVVVNKWDAVEKDSYTIYDYEKNLEARLHFTEWADTIYVSAVTGQRVEKILELVTKANEEHKRRVSTSVINEVLEDAVSWHSPPTSRGGRQGRIYYGTQVSTQPPTIALFVNEAKRFNDNYRRYIERQFRQQLGFKGTPIRLLWRSKKVRDVESGSANRATRV.

EngA-type G domains lie at 4–169 (PIVA…PPTT) and 177–352 (IKIA…EEHK). Residues 10–17 (GRPNVGKS), 57–61 (DTGGL), 120–123 (NKCE), 183–190 (GRPNVGKS), 230–234 (DTAGI), and 295–298 (NKWD) each bind GTP. The KH-like domain occupies 353–438 (RRVSTSVINE…PIRLLWRSKK (86 aa)).

This sequence belongs to the TRAFAC class TrmE-Era-EngA-EngB-Septin-like GTPase superfamily. EngA (Der) GTPase family. Associates with the 50S ribosomal subunit.

Functionally, GTPase that plays an essential role in the late steps of ribosome biogenesis. The polypeptide is GTPase Der (Trichormus variabilis (strain ATCC 29413 / PCC 7937) (Anabaena variabilis)).